We begin with the raw amino-acid sequence, 358 residues long: 3-dehydroquinate synthase (358 aa).

Residues 70 to 75 (DGEKFK), 104 to 108 (GVVGD), 128 to 129 (TT), Lys-141, Lys-150, and 168 to 171 (CLQT) each bind NAD(+). Zn(2+)-binding residues include Glu-183, His-246, and His-263.

Belongs to the sugar phosphate cyclases superfamily. Dehydroquinate synthase family. Co(2+) serves as cofactor. The cofactor is Zn(2+). NAD(+) is required as a cofactor.

The protein resides in the cytoplasm. It carries out the reaction 7-phospho-2-dehydro-3-deoxy-D-arabino-heptonate = 3-dehydroquinate + phosphate. Its pathway is metabolic intermediate biosynthesis; chorismate biosynthesis; chorismate from D-erythrose 4-phosphate and phosphoenolpyruvate: step 2/7. Catalyzes the conversion of 3-deoxy-D-arabino-heptulosonate 7-phosphate (DAHP) to dehydroquinate (DHQ). The protein is 3-dehydroquinate synthase of Shewanella frigidimarina (strain NCIMB 400).